The chain runs to 516 residues: Phosphatidylserine decarboxylase proenzyme 2, mitochondrial (516 aa).

Residues 1–21 (MRPRQRFRRFHPRWSKVNLRG) constitute a mitochondrion transit peptide. The Mitochondrial matrix portion of the chain corresponds to 22 to 33 (FGGVGALKGVKA). Residues 34–52 (LNGMNVRVSMRLKWISNRI) form a helical membrane-spanning segment. Topologically, residues 53-516 (HRIRRSRRLG…GQYVRVGEAL (464 aa)) are mitochondrial intermembrane. Active-site charge relay system; for autoendoproteolytic cleavage activity residues include Asp159, His373, and Ser488. Ser488 (schiff-base intermediate with substrate; via pyruvic acid; for decarboxylase activity) is an active-site residue. A Pyruvic acid (Ser); by autocatalysis modification is found at Ser488.

It belongs to the phosphatidylserine decarboxylase family. PSD-B subfamily. Eukaryotic type I sub-subfamily. In terms of assembly, heterodimer of a large membrane-associated beta subunit and a small pyruvoyl-containing alpha subunit. It depends on pyruvate as a cofactor. Is synthesized initially as an inactive proenzyme. Formation of the active enzyme involves a self-maturation process in which the active site pyruvoyl group is generated from an internal serine residue via an autocatalytic post-translational modification. Two non-identical subunits are generated from the proenzyme in this reaction, and the pyruvate is formed at the N-terminus of the alpha chain, which is derived from the carboxyl end of the proenzyme. The autoendoproteolytic cleavage occurs by a canonical serine protease mechanism, in which the side chain hydroxyl group of the serine supplies its oxygen atom to form the C-terminus of the beta chain, while the remainder of the serine residue undergoes an oxidative deamination to produce ammonia and the pyruvoyl prosthetic group on the alpha chain. During this reaction, the Ser that is part of the protease active site of the proenzyme becomes the pyruvoyl prosthetic group, which constitutes an essential element of the active site of the mature decarboxylase.

The protein resides in the mitochondrion. Its subcellular location is the mitochondrion inner membrane. It localises to the nucleus envelope. It is found in the lipid droplet. The protein localises to the endoplasmic reticulum membrane. It carries out the reaction a 1,2-diacyl-sn-glycero-3-phospho-L-serine + H(+) = a 1,2-diacyl-sn-glycero-3-phosphoethanolamine + CO2. It functions in the pathway phospholipid metabolism; phosphatidylethanolamine biosynthesis; phosphatidylethanolamine from CDP-diacylglycerol: step 2/2. Catalyzes the formation of phosphatidylethanolamine (PtdEtn) from phosphatidylserine (PtdSer). Plays a central role in phospholipid metabolism and in the interorganelle trafficking of phosphatidylserine. Together with psd1 and psd3, responsible for the majority of phosphatidylethanolamine synthesis. Plays a role in lipid droplet biogenesis at the endoplasmic reticulum membrane. The polypeptide is Phosphatidylserine decarboxylase proenzyme 2, mitochondrial (Schizosaccharomyces pombe (strain 972 / ATCC 24843) (Fission yeast)).